The sequence spans 37 residues: Large ribosomal subunit protein bL36 (37 aa).

The protein belongs to the bacterial ribosomal protein bL36 family.

This Desulfotalea psychrophila (strain LSv54 / DSM 12343) protein is Large ribosomal subunit protein bL36.